We begin with the raw amino-acid sequence, 433 residues long: Cyclin-dependent kinase F-3 (433 aa).

In terms of domain architecture, Protein kinase spans 4 to 283; that stretch reads YKVIREIGDG…AEQSLQHPFF (280 aa). ATP contacts are provided by residues 10-18 and Lys-33; that span reads IGDGTCGNV. The active-site Proton acceptor is Asp-125. The residue at position 151 (Ser-151) is a Phosphoserine. Phosphothreonine is present on Thr-156.

This sequence belongs to the protein kinase superfamily. CMGC Ser/Thr protein kinase family. CDC2/CDKX subfamily.

The catalysed reaction is L-seryl-[protein] + ATP = O-phospho-L-seryl-[protein] + ADP + H(+). It catalyses the reaction L-threonyl-[protein] + ATP = O-phospho-L-threonyl-[protein] + ADP + H(+). The enzyme catalyses [DNA-directed RNA polymerase] + ATP = phospho-[DNA-directed RNA polymerase] + ADP + H(+). The polypeptide is Cyclin-dependent kinase F-3 (CDKF-3) (Oryza sativa subsp. japonica (Rice)).